The sequence spans 109 residues: Flagellar hook-basal body complex protein FliE (109 aa).

It belongs to the FliE family.

Its subcellular location is the bacterial flagellum basal body. The sequence is that of Flagellar hook-basal body complex protein FliE from Pseudomonas fluorescens (strain SBW25).